An 899-amino-acid chain; its full sequence is Translation initiation factor IF-2 (899 aa).

Disordered regions lie at residues 65–84 (KTRS…SVQI) and 91–310 (TYVK…SFNK). Polar residues predominate over residues 68–82 (STLNVPSTGGKSKSV). A compositionally biased stretch (basic and acidic residues) spans 108-164 (QARREAEEQAQRAAEEQAKREAELREAAEKAKRAADEQAKREAAEKAKRDVAEKEKV). Residues 165-174 (TNQQNENMTK) are compositionally biased toward polar residues. Residues 177-236 (QAEKAKREAEAAELKRKAEEAARLKVEEEARRIAEEARRMAEENAGRWEAESAKPEESAD) are compositionally biased toward basic and acidic residues. Residues 262-276 (SRSRAGKVTKQKKGN) show a composition bias toward basic residues. The span at 277-290 (RQSESKADREEARA) shows a compositional bias: basic and acidic residues. The tr-type G domain occupies 398 to 567 (ARAPVVTIMG…LLQAEVLELK (170 aa)). Residues 407–414 (GHVDHGKT) are G1. 407–414 (GHVDHGKT) contributes to the GTP binding site. The interval 432 to 436 (GITQH) is G2. The tract at residues 453–456 (DTPG) is G3. GTP contacts are provided by residues 453–457 (DTPGH) and 507–510 (NKID). The tract at residues 507 to 510 (NKID) is G4. A G5 region spans residues 543 to 545 (SAK).

The protein belongs to the TRAFAC class translation factor GTPase superfamily. Classic translation factor GTPase family. IF-2 subfamily.

Its subcellular location is the cytoplasm. Its function is as follows. One of the essential components for the initiation of protein synthesis. Protects formylmethionyl-tRNA from spontaneous hydrolysis and promotes its binding to the 30S ribosomal subunits. Also involved in the hydrolysis of GTP during the formation of the 70S ribosomal complex. In Pectobacterium carotovorum subsp. carotovorum (strain PC1), this protein is Translation initiation factor IF-2.